The chain runs to 65 residues: Hainantoxin-X-3 (65 aa).

The signal sequence occupies residues 1 to 20 (MNMKILVLVAVLCLVVSTHA). Residues 21–37 (ERHSKTDMEDSPMIQER) constitute a propeptide that is removed on maturation. Cystine bridges form between Cys46-Cys59 and Cys55-Cys64.

The protein belongs to the neurotoxin 36 family. 02 subfamily. Expressed by the venom gland.

The protein localises to the secreted. Functionally, reversibly blocks N-type calcium channels (Cav2.2/CACNA1B) in rat dorsal root ganglion cells. Elicits no toxic symptoms in either vertebrates or invertebrates during a period of 48 hours post-injection, when it was assayed in vivo by direct injection into mice and cockroaches. The sequence is that of Hainantoxin-X-3 from Cyriopagopus hainanus (Chinese bird spider).